A 1134-amino-acid polypeptide reads, in one-letter code: Phytochrome 1 (1134 aa).

Residues 219-401 (DIGLLCDTVV…VFGLQLNMEA (183 aa)) form the GAF domain. Phytochromobilin is bound at residue Cys-324. The PAS 1 domain occupies 616 to 687 (VANEMVRLIE…RLLYLALQGD (72 aa)). Residues 690 to 746 (QNVELKLKTFGGQKDKEAVILVVNACASRDVSDNVVGVCFVGQDVTGQKVVMDKFTR) form the PAC domain. Residues 750–821 (DYKAIVQNPN…KGQDAVTKFM (72 aa)) form the PAS 2 domain. A Histidine kinase domain is found at 901–1121 (YIRQEIKNPL…LVSLELPLAQ (221 aa)).

This sequence belongs to the phytochrome family. Homodimer. Post-translationally, contains one covalently linked phytochromobilin chromophore.

Functionally, regulatory photoreceptor which exists in two forms that are reversibly interconvertible by light: the Pr form that absorbs maximally in the red region of the spectrum and the Pfr form that absorbs maximally in the far-red region. Photoconversion of Pr to Pfr induces an array of morphogenic responses, whereas reconversion of Pfr to Pr cancels the induction of those responses. Pfr controls the expression of a number of nuclear genes including those encoding the small subunit of ribulose-bisphosphate carboxylase, chlorophyll A/B binding protein, protochlorophyllide reductase, rRNA, etc. It also controls the expression of its own gene(s) in a negative feedback fashion. The protein is Phytochrome 1 (PHY1) of Selaginella martensii (Martens's spike moss).